We begin with the raw amino-acid sequence, 161 residues long: Shikimate kinase (161 aa).

Position 10 to 15 (10 to 15) interacts with ATP; that stretch reads GAGKTT. Thr-14 contacts Mg(2+). Substrate contacts are provided by Asp-28, Arg-52, and Gly-74. Arg-114 serves as a coordination point for ATP. Arg-132 contributes to the substrate binding site.

The protein belongs to the shikimate kinase family. Monomer. It depends on Mg(2+) as a cofactor.

The protein localises to the cytoplasm. The enzyme catalyses shikimate + ATP = 3-phosphoshikimate + ADP + H(+). It functions in the pathway metabolic intermediate biosynthesis; chorismate biosynthesis; chorismate from D-erythrose 4-phosphate and phosphoenolpyruvate: step 5/7. In terms of biological role, catalyzes the specific phosphorylation of the 3-hydroxyl group of shikimic acid using ATP as a cosubstrate. The protein is Shikimate kinase of Streptococcus gordonii (strain Challis / ATCC 35105 / BCRC 15272 / CH1 / DL1 / V288).